Consider the following 317-residue polypeptide: Acetyl-coenzyme A carboxylase carboxyl transferase subunit beta (317 aa).

The segment at 1 to 28 is disordered; the sequence is MANNMTDTMTKPDINNDSTSLQQNGNKA. The region spanning 55–317 is the CoA carboxyltransferase N-terminal domain; that stretch reads PSTKCSSCHS…LCSVPNVDVQ (263 aa). Cys-59, Cys-62, Cys-78, and Cys-81 together coordinate Zn(2+). Residues 59-81 form a C4-type zinc finger; sequence CSSCHSIITNTALIFNCYVCPHC.

The protein belongs to the AccD/PCCB family. In terms of assembly, acetyl-CoA carboxylase is a heterohexamer composed of biotin carboxyl carrier protein (AccB), biotin carboxylase (AccC) and two subunits each of ACCase subunit alpha (AccA) and ACCase subunit beta (AccD). Zn(2+) serves as cofactor.

It is found in the cytoplasm. It catalyses the reaction N(6)-carboxybiotinyl-L-lysyl-[protein] + acetyl-CoA = N(6)-biotinyl-L-lysyl-[protein] + malonyl-CoA. It participates in lipid metabolism; malonyl-CoA biosynthesis; malonyl-CoA from acetyl-CoA: step 1/1. Functionally, component of the acetyl coenzyme A carboxylase (ACC) complex. Biotin carboxylase (BC) catalyzes the carboxylation of biotin on its carrier protein (BCCP) and then the CO(2) group is transferred by the transcarboxylase to acetyl-CoA to form malonyl-CoA. The chain is Acetyl-coenzyme A carboxylase carboxyl transferase subunit beta from Psychrobacter cryohalolentis (strain ATCC BAA-1226 / DSM 17306 / VKM B-2378 / K5).